A 1097-amino-acid chain; its full sequence is Protein STICHEL-like 3 (1097 aa).

Disordered regions lie at residues 1–22, 74–168, 220–293, 321–358, and 400–436; these read MTTT…NNRI, SLRD…YRIG, NVRP…GFGE, GRSL…DSSS, and DSDL…LTEK. Positions 10–20 are enriched in polar residues; it reads RVASSSSTRNN. Over residues 95–113 the composition is skewed to basic and acidic residues; it reads LPKKGDLVEGGRRSVDLKK. Residues 126–136 show a composition bias toward polar residues; it reads PVVNFGTSKVT. Residues 137–168 are compositionally biased toward basic and acidic residues; the sequence is PSDERSGPVSGERDSGRRVKREESSRKSYRIG. The span at 227-241 shows a compositional bias: gly residues; sequence YGGGGGGGNTRGCAG. A compositionally biased stretch (basic residues) spans 245–259; sequence RPKRRKFRGTRRVRG. Composition is skewed to basic and acidic residues over residues 281–291 and 332–345; these read VEKHDGEKEGF and KGGR…RNGS. The segment covering 346-358 has biased composition (low complexity); the sequence is DKMMIQSDDDSSS. The span at 411-429 shows a compositional bias: basic residues; the sequence is EKKHKKKSHVNARHRHRQQ. Residue 472–479 coordinates ATP; the sequence is GPNGTGKT. Positions 491, 500, 503, and 506 each coordinate Zn(2+). A coiled-coil region spans residues 742–770; it reads KEDMEKLRQALKTLSEAEKQLRVSNDKLT. 3 disordered regions span residues 790-828, 913-932, and 956-1003; these read SSTA…DSRK, DPRN…DKSL, and VTES…SQSI. Basic and acidic residues-rich tracts occupy residues 796–807 and 818–828; these read GGRESSDHHLDP and GLDRRRGDSRK. The segment covering 993 to 1003 has biased composition (polar residues); it reads ASQSQNQSQSI.

The protein belongs to the DnaX/STICHEL family.

The sequence is that of Protein STICHEL-like 3 from Arabidopsis thaliana (Mouse-ear cress).